The chain runs to 236 residues: 5'-methylthioadenosine/S-adenosylhomocysteine nucleosidase (236 aa).

The active-site Proton acceptor is the Glu12. Substrate-binding positions include Gly78, Ile153, and 174–175; that span reads ME. The active-site Proton donor is Asp198.

This sequence belongs to the PNP/UDP phosphorylase family. MtnN subfamily.

It catalyses the reaction S-adenosyl-L-homocysteine + H2O = S-(5-deoxy-D-ribos-5-yl)-L-homocysteine + adenine. The enzyme catalyses S-methyl-5'-thioadenosine + H2O = 5-(methylsulfanyl)-D-ribose + adenine. The catalysed reaction is 5'-deoxyadenosine + H2O = 5-deoxy-D-ribose + adenine. The protein operates within amino-acid biosynthesis; L-methionine biosynthesis via salvage pathway; S-methyl-5-thio-alpha-D-ribose 1-phosphate from S-methyl-5'-thioadenosine (hydrolase route): step 1/2. In terms of biological role, catalyzes the irreversible cleavage of the glycosidic bond in both 5'-methylthioadenosine (MTA) and S-adenosylhomocysteine (SAH/AdoHcy) to adenine and the corresponding thioribose, 5'-methylthioribose and S-ribosylhomocysteine, respectively. Also cleaves 5'-deoxyadenosine, a toxic by-product of radical S-adenosylmethionine (SAM) enzymes, into 5-deoxyribose and adenine. The protein is 5'-methylthioadenosine/S-adenosylhomocysteine nucleosidase of Shewanella sp. (strain MR-7).